We begin with the raw amino-acid sequence, 519 residues long: DDB1- and CUL4-associated factor 17 (519 aa).

The next 2 helical transmembrane spans lie at 186–206 (VLLY…ILEI) and 222–242 (GILI…QAII).

In terms of assembly, interacts with DDB1, CUL4A and CUL4B. In terms of tissue distribution, ubiquitously expressed in the embryo, with higher expression in brain, liver and skin tissues.

The protein resides in the membrane. Its subcellular location is the nucleus. The protein localises to the nucleolus. Its pathway is protein modification; protein ubiquitination. Its function is as follows. May function as a substrate receptor for CUL4-DDB1 E3 ubiquitin-protein ligase complex. This is DDB1- and CUL4-associated factor 17 (Dcaf17) from Mus musculus (Mouse).